Consider the following 830-residue polypeptide: Dimethylglycine oxidase (830 aa).

Residues Ile14–Val15, Asp35–Gln36, Ser45–His48, Leu52, and Val174 each bind FAD. Pros-8alpha-FAD histidine is present on His48. Catalysis depends on residues His225 and Tyr259. FAD-binding positions include Tyr259 and Val360–Thr363. (6S)-5,6,7,8-tetrahydrofolate is bound at residue Tyr539. The For 5,10-methylenetetrahydrofolate synthesis activity role is filled by Asp552. (6S)-5,6,7,8-tetrahydrofolate-binding positions include Thr554, Gly566, and Glu658–Tyr660.

The protein belongs to the GcvT family. FAD serves as cofactor.

It catalyses the reaction N,N-dimethylglycine + O2 + H2O = sarcosine + formaldehyde + H2O2. The enzyme catalyses N,N-dimethylglycine + (6S)-5,6,7,8-tetrahydrofolate + O2 = sarcosine + (6R)-5,10-methylene-5,6,7,8-tetrahydrofolate + H2O2. Catalyzes the oxidative demethylation of N,N-dimethylglycine to yield sarcosine, formaldehyde and hydrogen peroxide. The oxidation of dimethylglycine is coupled to the synthesis of 5,10-methylenetetrahydrofolate through an unusual substrate channeling mechanism. This channeling occurs by nonbiased diffusion of the iminium intermediate through a large solvent cavity connecting active site 1 (N-terminus) and active site 2 (C-terminus). The synthesis of 5,10-methylenetetrahydrofolate (at active site 2) prevents the accumulation of formaldehyde, formed by hydrolysis of the iminium intermediate product (at active site 1). Does not oxidize sarcosine. The sequence is that of Dimethylglycine oxidase (dmg) from Arthrobacter globiformis.